The following is a 485-amino-acid chain: Tektin-5 (485 aa).

Coiled-coil stretches lie at residues 114 to 185 (RLTD…EVNC), 225 to 247 (QEQM…DAQH), 307 to 385 (QNMR…MAKE), and 421 to 444 (TIDD…QLLV).

Belongs to the tektin family. Microtubule inner protein component of sperm flagellar doublet microtubules. Interacts with TEKT3. Post-translationally, ubiquitinated, leading to its degradation. Deubiquitinated by USP16, promoting its stability.

Its subcellular location is the cytoplasm. The protein resides in the cytoskeleton. It is found in the flagellum axoneme. Its function is as follows. Sperm-specific microtubule inner protein (MIP) part of the dynein-decorated doublet microtubules (DMTs) in flagellar axoneme. Forms an extensive interaction network in different conformations that reinforces the helix bundle composed by other tektin proteins (TEKT1 to TEKT4) and MIPs to anchor the tektin bundle onto the tubulin wall of A-tubule of the sperm flagellum. This Homo sapiens (Human) protein is Tektin-5 (TEKT5).